A 982-amino-acid chain; its full sequence is Mineralocorticoid receptor (982 aa).

The interval 1–601 is modulating; that stretch reads METKGYHSLP…STGSSRPSKI (601 aa). The span at 230-242 shows a compositional bias: polar residues; that stretch reads QGTPLTCSPNVEN. Disordered stretches follow at residues 230–328 and 345–375; these read QGTP…AAST and SGTS…PFPK. 5 positions are modified to phosphoserine: S249, S258, S282, S286, and S298. Positions 258–299 are enriched in low complexity; that stretch reads SPLSSPLSSMKSSISSPPSHCSVKSPVSSPNNVTPRSSVSSP. The span at 300 to 328 shows a compositional bias: polar residues; sequence ANINNSRCSVSSPSNTNNRSTLSSPAAST. Residues 345–354 are compositionally biased toward low complexity; that stretch reads SGTSAGSSTS. Positions 602, 605, 619, 622, 638, 644, 654, and 657 each coordinate Zn(2+). NR C4-type zinc fingers lie at residues 602–622 and 638–662; these read CLVC…CGSC and CAGR…LQKC. Positions 602 to 667 form a DNA-binding region, nuclear receptor; that stretch reads CLVCGDEASG…RLQKCLQAGM (66 aa). Positions 668–723 are hinge; it reads NLGARRSKKLGKLKGIHEEQPQQQPPPPPPPPQSPEEGTTYIAPAKEPSVNTALVP. Residues 682 to 708 are disordered; it reads GIHEEQPQQQPPPPPPPPQSPEEGTTY. Pro residues predominate over residues 690–701; it reads QQPPPPPPPPQS. In terms of domain architecture, NR LBD spans 724-962; it reads QLSAISRALT…EFPAMLVEII (239 aa). Residues N768 and Q774 each contribute to the 21-hydroxyprogesterone site. Aldosterone is bound by residues N768 and Q774. N768 and Q774 together coordinate progesterone. Residues 780–783 are important for coactivator binding; sequence KWAK. Residues R815 and T943 each coordinate 21-hydroxyprogesterone. R815 and T943 together coordinate aldosterone. Residues R815 and T943 each coordinate progesterone.

The protein belongs to the nuclear hormone receptor family. NR3 subfamily. In terms of processing, phosphorylated. Expressed in hippocampus, being restricted to the more superficial cortical layers.

Its subcellular location is the cytoplasm. It localises to the nucleus. Receptor for both mineralocorticoids (MC) such as aldosterone and glucocorticoids (GC) such as corticosterone or cortisol. Binds to mineralocorticoid response elements (MRE) and transactivates target genes. The effect of MC is to increase ion and water transport and thus raise extracellular fluid volume and blood pressure and lower potassium levels. The polypeptide is Mineralocorticoid receptor (NR3C2) (Saimiri sciureus (Common squirrel monkey)).